We begin with the raw amino-acid sequence, 241 residues long: 1-(5-phosphoribosyl)-5-[(5-phosphoribosylamino)methylideneamino] imidazole-4-carboxamide isomerase (241 aa).

The Proton acceptor role is filled by Asp-8. The active-site Proton donor is Asp-130.

It belongs to the HisA/HisF family.

The protein localises to the cytoplasm. The catalysed reaction is 1-(5-phospho-beta-D-ribosyl)-5-[(5-phospho-beta-D-ribosylamino)methylideneamino]imidazole-4-carboxamide = 5-[(5-phospho-1-deoxy-D-ribulos-1-ylimino)methylamino]-1-(5-phospho-beta-D-ribosyl)imidazole-4-carboxamide. It participates in amino-acid biosynthesis; L-histidine biosynthesis; L-histidine from 5-phospho-alpha-D-ribose 1-diphosphate: step 4/9. The protein is 1-(5-phosphoribosyl)-5-[(5-phosphoribosylamino)methylideneamino] imidazole-4-carboxamide isomerase of Francisella philomiragia subsp. philomiragia (strain ATCC 25017 / CCUG 19701 / FSC 153 / O#319-036).